Reading from the N-terminus, the 427-residue chain is Peptidase B (427 aa).

Mn(2+) is bound by residues Lys-195 and Asp-200. Lys-207 is an active-site residue. Asp-218, Asp-277, and Glu-279 together coordinate Mn(2+). Arg-281 is a catalytic residue.

This sequence belongs to the peptidase M17 family. In terms of assembly, homohexamer. Mn(2+) serves as cofactor.

Its subcellular location is the cytoplasm. The enzyme catalyses Release of an N-terminal amino acid, Xaa, from a peptide or arylamide. Xaa is preferably Glu or Asp but may be other amino acids, including Leu, Met, His, Cys and Gln.. In terms of biological role, probably plays an important role in intracellular peptide degradation. The protein is Peptidase B of Escherichia coli (strain SMS-3-5 / SECEC).